The sequence spans 2371 residues: Reducing polyketide synthase DEP5 (2371 aa).

Residues L47 to S477 form the Ketosynthase family 3 (KS3) domain. Active-site for beta-ketoacyl synthase activity residues include C221, H358, and H399. The segment at V593–S905 is malonyl-CoA:ACP transacylase (MAT) domain. Residue S685 is the For malonyltransferase activity of the active site. An N-terminal hotdog fold region spans residues H982–K1120. Residues H982 to M1158 are dehydratase (DH) domain. Residues H982 to Q1286 form the PKS/mFAS DH domain. Catalysis depends on H1014, which acts as the Proton acceptor; for dehydratase activity. Positions P1132–Q1286 are C-terminal hotdog fold. D1195 functions as the Proton donor; for dehydratase activity in the catalytic mechanism. Residues G1656–L1964 form an enoyl reductase (ER) domain region. The tract at residues A1988–M2163 is ketoreductase (KR) domain. A Carrier domain is found at S2286–Q2364. O-(pantetheine 4'-phosphoryl)serine is present on S2323.

It participates in polyketide biosynthesis. In terms of biological role, part of the gene cluster that mediates the biosynthesis of depudecin, a highly oxidized eleven-carbon linear polyketide that acts as a histone deacetylase (HDAC) inhibitor and makes a small contribution to pathogenesis. The reducing polyketide synthase DEP5 is the central enzyme in depudecin biosynthesis by yielding the backbone polyketide chain. The monooxygenases DEP2 and DEP4, as well as the uncharacterized protein DEP1, then act as tailoring enzymes to modify the intermediate polyketide chain into depudecin. This is Reducing polyketide synthase DEP5 from Fusarium langsethiae.